The sequence spans 28 residues: Cruzioseptin-3 (28 aa).

Gln-25 carries the glutamine amide modification. Positions 27 to 28 (EQ) are excised as a propeptide.

As to expression, expressed by the skin glands.

It localises to the secreted. Functionally, has antimicrobial activity against Gram-negative bacterium E.coli (MIC=13.32 uM), against Gram-positive bacterium S.aureus (MIC=13.32 uM) and against fungus C.albicans (MIC=13.32 uM). At higher concentrations also has a bactericidal and fungicidal effect. Has hemagglutinating activity against horse erythrocytes. This Cruziohyla calcarifer (Splendid leaf frog) protein is Cruzioseptin-3.